The chain runs to 223 residues: Orotate phosphoribosyltransferase (223 aa).

Residues R107, K108, K111, H113, and 133–141 (EDLTTAGGS) contribute to the 5-phospho-alpha-D-ribose 1-diphosphate site. Orotate is bound at residue T137. A compositionally biased stretch (low complexity) spans 192–211 (SPGSRSSSTTRRCRKSSPSS). The disordered stretch occupies residues 192-212 (SPGSRSSSTTRRCRKSSPSSM).

It belongs to the purine/pyrimidine phosphoribosyltransferase family. PyrE subfamily. Homodimer. The cofactor is Mg(2+).

It carries out the reaction orotidine 5'-phosphate + diphosphate = orotate + 5-phospho-alpha-D-ribose 1-diphosphate. The protein operates within pyrimidine metabolism; UMP biosynthesis via de novo pathway; UMP from orotate: step 1/2. Its function is as follows. Catalyzes the transfer of a ribosyl phosphate group from 5-phosphoribose 1-diphosphate to orotate, leading to the formation of orotidine monophosphate (OMP). This chain is Orotate phosphoribosyltransferase (pyrE), found in Rhizobium leguminosarum bv. trifolii.